Reading from the N-terminus, the 437-residue chain is Trigger factor (437 aa).

The region spanning 161 to 246 (GDRVNIDFKG…VNKVEGKALP (86 aa)) is the PPIase FKBP-type domain.

The protein belongs to the FKBP-type PPIase family. Tig subfamily.

Its subcellular location is the cytoplasm. The enzyme catalyses [protein]-peptidylproline (omega=180) = [protein]-peptidylproline (omega=0). In terms of biological role, involved in protein export. Acts as a chaperone by maintaining the newly synthesized protein in an open conformation. Functions as a peptidyl-prolyl cis-trans isomerase. This is Trigger factor from Alcanivorax borkumensis (strain ATCC 700651 / DSM 11573 / NCIMB 13689 / SK2).